We begin with the raw amino-acid sequence, 313 residues long: Ribosomal RNA small subunit methyltransferase H (313 aa).

S-adenosyl-L-methionine is bound by residues 35–37 (GGH), Asp-55, Phe-81, Asp-103, and Gln-110.

This sequence belongs to the methyltransferase superfamily. RsmH family.

It localises to the cytoplasm. The catalysed reaction is cytidine(1402) in 16S rRNA + S-adenosyl-L-methionine = N(4)-methylcytidine(1402) in 16S rRNA + S-adenosyl-L-homocysteine + H(+). Its function is as follows. Specifically methylates the N4 position of cytidine in position 1402 (C1402) of 16S rRNA. The polypeptide is Ribosomal RNA small subunit methyltransferase H (Pseudomonas paraeruginosa (strain DSM 24068 / PA7) (Pseudomonas aeruginosa (strain PA7))).